A 203-amino-acid polypeptide reads, in one-letter code: Holliday junction branch migration complex subunit RuvA (203 aa).

The segment at 1 to 63 is domain I; sequence MIGKLSGKVD…EEHMHLYGFL (63 aa). Residues 64 to 142 are domain II; it reads TLEEKIFFNL…KISSGSAIIK (79 aa). Residues 143–149 are flexible linker; that stretch reads ESLNIKN. Residues 150 to 203 form a domain III region; it reads ITPVASNEVIKALVNLGFSRFEAQNAVQGIITQNPEISIDELIKTALKNRNSNF.

The protein belongs to the RuvA family. As to quaternary structure, homotetramer. Forms an RuvA(8)-RuvB(12)-Holliday junction (HJ) complex. HJ DNA is sandwiched between 2 RuvA tetramers; dsDNA enters through RuvA and exits via RuvB. An RuvB hexamer assembles on each DNA strand where it exits the tetramer. Each RuvB hexamer is contacted by two RuvA subunits (via domain III) on 2 adjacent RuvB subunits; this complex drives branch migration. In the full resolvosome a probable DNA-RuvA(4)-RuvB(12)-RuvC(2) complex forms which resolves the HJ.

The protein resides in the cytoplasm. Functionally, the RuvA-RuvB-RuvC complex processes Holliday junction (HJ) DNA during genetic recombination and DNA repair, while the RuvA-RuvB complex plays an important role in the rescue of blocked DNA replication forks via replication fork reversal (RFR). RuvA specifically binds to HJ cruciform DNA, conferring on it an open structure. The RuvB hexamer acts as an ATP-dependent pump, pulling dsDNA into and through the RuvAB complex. HJ branch migration allows RuvC to scan DNA until it finds its consensus sequence, where it cleaves and resolves the cruciform DNA. This Rickettsia peacockii (strain Rustic) protein is Holliday junction branch migration complex subunit RuvA.